Reading from the N-terminus, the 163-residue chain is UPF0763 protein JJD26997_0796 (163 aa).

This sequence belongs to the UPF0763 family.

In Campylobacter jejuni subsp. doylei (strain ATCC BAA-1458 / RM4099 / 269.97), this protein is UPF0763 protein JJD26997_0796.